We begin with the raw amino-acid sequence, 379 residues long: Probable G-protein coupled receptor 27 (379 aa).

Residues methionine 1–alanine 26 lie on the Extracellular side of the membrane. Asparagine 3 is a glycosylation site (N-linked (GlcNAc...) asparagine). A helical transmembrane segment spans residues threonine 27–valine 47. At arginine 48 to tyrosine 58 the chain is on the cytoplasmic side. Residues leucine 59–methionine 79 traverse the membrane as a helical segment. Residues leucine 80–leucine 100 lie on the Extracellular side of the membrane. A disulfide bridge links cysteine 98 with cysteine 175. The chain crosses the membrane as a helical span at residues leucine 101–valine 121. Residues threonine 122–cysteine 142 lie on the Cytoplasmic side of the membrane. A helical transmembrane segment spans residues alanine 143 to leucine 163. Over aspartate 164–proline 185 the chain is Extracellular. Residues glycine 186–leucine 206 form a helical membrane-spanning segment. Residues arginine 207 to methionine 289 lie on the Cytoplasmic side of the membrane. A helical membrane pass occupies residues phenylalanine 290–leucine 310. Topologically, residues arginine 311 to leucine 324 are extracellular. Residues threonine 325–phenylalanine 345 form a helical membrane-spanning segment. Topologically, residues asparagine 346 to leucine 379 are cytoplasmic.

Belongs to the G-protein coupled receptor 1 family.

The protein localises to the cell membrane. Its function is as follows. Orphan receptor. Possible candidate for amine-like G-protein coupled receptor. This chain is Probable G-protein coupled receptor 27 (Gpr27), found in Mus musculus (Mouse).